The following is a 320-amino-acid chain: Ribose-phosphate pyrophosphokinase 1 (320 aa).

Residues 39–41 (DGE) and 98–99 (RQ) each bind ATP. Histidine 132 and aspartate 173 together coordinate Mg(2+). Lysine 196 is an active-site residue. Residues arginine 198, aspartate 224, and 228–232 (DTAGT) each bind D-ribose 5-phosphate.

The protein belongs to the ribose-phosphate pyrophosphokinase family. Class I subfamily. In terms of assembly, homohexamer. Mg(2+) is required as a cofactor.

It localises to the cytoplasm. It carries out the reaction D-ribose 5-phosphate + ATP = 5-phospho-alpha-D-ribose 1-diphosphate + AMP + H(+). Its pathway is metabolic intermediate biosynthesis; 5-phospho-alpha-D-ribose 1-diphosphate biosynthesis; 5-phospho-alpha-D-ribose 1-diphosphate from D-ribose 5-phosphate (route I): step 1/1. Functionally, involved in the biosynthesis of the central metabolite phospho-alpha-D-ribosyl-1-pyrophosphate (PRPP) via the transfer of pyrophosphoryl group from ATP to 1-hydroxyl of ribose-5-phosphate (Rib-5-P). This Streptococcus pyogenes serotype M1 protein is Ribose-phosphate pyrophosphokinase 1.